The chain runs to 447 residues: Trigger factor (447 aa).

Residues 174–261 (GDIAVLGFKG…LKDLKTRELP (88 aa)) form the PPIase FKBP-type domain.

It belongs to the FKBP-type PPIase family. Tig subfamily.

It localises to the cytoplasm. It catalyses the reaction [protein]-peptidylproline (omega=180) = [protein]-peptidylproline (omega=0). Involved in protein export. Acts as a chaperone by maintaining the newly synthesized protein in an open conformation. Functions as a peptidyl-prolyl cis-trans isomerase. This chain is Trigger factor, found in Synechococcus sp. (strain CC9902).